A 324-amino-acid polypeptide reads, in one-letter code: D-alanine--D-alanine ligase (324 aa).

The 201-residue stretch at 112 to 312 folds into the ATP-grasp domain; that stretch reads KAVLAAAGVT…FDQLVLWIVE (201 aa). 139–193 contacts ATP; sequence LQPPYVVKPNAEGSSVGVFIIKEGANRPPEEVGAPSWTFGEEVMVEPYIQGMELA. Positions 265, 279, and 281 each coordinate Mg(2+).

This sequence belongs to the D-alanine--D-alanine ligase family. The cofactor is Mg(2+). Requires Mn(2+) as cofactor.

The protein resides in the cytoplasm. The catalysed reaction is 2 D-alanine + ATP = D-alanyl-D-alanine + ADP + phosphate + H(+). Its pathway is cell wall biogenesis; peptidoglycan biosynthesis. In terms of biological role, cell wall formation. The chain is D-alanine--D-alanine ligase from Caulobacter vibrioides (strain ATCC 19089 / CIP 103742 / CB 15) (Caulobacter crescentus).